Reading from the N-terminus, the 308-residue chain is Ornithine carbamoyltransferase (308 aa).

Carbamoyl phosphate contacts are provided by residues 57 to 60 (STRT), Q84, R108, and 135 to 138 (HPCQ). L-ornithine is bound by residues N166, D224, and 228–229 (SM). Residues 264-265 (CL) and R292 contribute to the carbamoyl phosphate site.

It belongs to the aspartate/ornithine carbamoyltransferase superfamily. OTCase family.

The protein resides in the cytoplasm. It carries out the reaction carbamoyl phosphate + L-ornithine = L-citrulline + phosphate + H(+). It functions in the pathway amino-acid biosynthesis; L-arginine biosynthesis; L-arginine from L-ornithine and carbamoyl phosphate: step 1/3. Functionally, reversibly catalyzes the transfer of the carbamoyl group from carbamoyl phosphate (CP) to the N(epsilon) atom of ornithine (ORN) to produce L-citrulline. The chain is Ornithine carbamoyltransferase from Ralstonia nicotianae (strain ATCC BAA-1114 / GMI1000) (Ralstonia solanacearum).